Reading from the N-terminus, the 124-residue chain is UPF0738 protein ABC2521 (124 aa).

It belongs to the UPF0738 family.

This Shouchella clausii (strain KSM-K16) (Alkalihalobacillus clausii) protein is UPF0738 protein ABC2521.